Here is a 322-residue protein sequence, read N- to C-terminus: Transaldolase (322 aa).

K132 acts as the Schiff-base intermediate with substrate in catalysis.

The protein belongs to the transaldolase family. Type 1 subfamily. In terms of assembly, homodimer.

It is found in the cytoplasm. It carries out the reaction D-sedoheptulose 7-phosphate + D-glyceraldehyde 3-phosphate = D-erythrose 4-phosphate + beta-D-fructose 6-phosphate. It functions in the pathway carbohydrate degradation; pentose phosphate pathway; D-glyceraldehyde 3-phosphate and beta-D-fructose 6-phosphate from D-ribose 5-phosphate and D-xylulose 5-phosphate (non-oxidative stage): step 2/3. Transaldolase is important for the balance of metabolites in the pentose-phosphate pathway. The polypeptide is Transaldolase (Protochlamydia amoebophila (strain UWE25)).